The primary structure comprises 156 residues: Small ribosomal subunit protein uS7 (156 aa).

The protein belongs to the universal ribosomal protein uS7 family. In terms of assembly, part of the 30S ribosomal subunit. Contacts proteins S9 and S11.

In terms of biological role, one of the primary rRNA binding proteins, it binds directly to 16S rRNA where it nucleates assembly of the head domain of the 30S subunit. Is located at the subunit interface close to the decoding center, probably blocks exit of the E-site tRNA. This is Small ribosomal subunit protein uS7 from Streptococcus pneumoniae (strain Taiwan19F-14).